Here is a 251-residue protein sequence, read N- to C-terminus: Cell division protein ZapD (251 aa).

This sequence belongs to the ZapD family. In terms of assembly, interacts with FtsZ.

It is found in the cytoplasm. Its function is as follows. Cell division factor that enhances FtsZ-ring assembly. Directly interacts with FtsZ and promotes bundling of FtsZ protofilaments, with a reduction in FtsZ GTPase activity. In Nitrosomonas eutropha (strain DSM 101675 / C91 / Nm57), this protein is Cell division protein ZapD.